The following is a 447-amino-acid chain: ATP-dependent protease ATPase subunit HslU (447 aa).

Residues Ile-18, 60–65 (GVGKTE), Asp-259, Glu-325, and Arg-397 each bind ATP.

It belongs to the ClpX chaperone family. HslU subfamily. As to quaternary structure, a double ring-shaped homohexamer of HslV is capped on each side by a ring-shaped HslU homohexamer. The assembly of the HslU/HslV complex is dependent on binding of ATP.

The protein resides in the cytoplasm. In terms of biological role, ATPase subunit of a proteasome-like degradation complex; this subunit has chaperone activity. The binding of ATP and its subsequent hydrolysis by HslU are essential for unfolding of protein substrates subsequently hydrolyzed by HslV. HslU recognizes the N-terminal part of its protein substrates and unfolds these before they are guided to HslV for hydrolysis. The protein is ATP-dependent protease ATPase subunit HslU of Burkholderia cenocepacia (strain ATCC BAA-245 / DSM 16553 / LMG 16656 / NCTC 13227 / J2315 / CF5610) (Burkholderia cepacia (strain J2315)).